A 545-amino-acid chain; its full sequence is Chaperonin GroEL (545 aa).

Residues 30-33, Lys51, 87-91, Gly415, 483-485, and Asp499 contribute to the ATP site; these read TLGP, DGTTT, and NAA.

This sequence belongs to the chaperonin (HSP60) family. Forms a cylinder of 14 subunits composed of two heptameric rings stacked back-to-back. Interacts with the co-chaperonin GroES.

It localises to the cytoplasm. The catalysed reaction is ATP + H2O + a folded polypeptide = ADP + phosphate + an unfolded polypeptide.. In terms of biological role, together with its co-chaperonin GroES, plays an essential role in assisting protein folding. The GroEL-GroES system forms a nano-cage that allows encapsulation of the non-native substrate proteins and provides a physical environment optimized to promote and accelerate protein folding. This is Chaperonin GroEL from Aquifex aeolicus (strain VF5).